A 1291-amino-acid chain; its full sequence is DNA-directed RNA polymerase subunit beta (1291 aa).

Belongs to the RNA polymerase beta chain family. The RNAP catalytic core consists of 2 alpha, 1 beta, 1 beta' and 1 omega subunit. When a sigma factor is associated with the core the holoenzyme is formed, which can initiate transcription.

It catalyses the reaction RNA(n) + a ribonucleoside 5'-triphosphate = RNA(n+1) + diphosphate. Its function is as follows. DNA-dependent RNA polymerase catalyzes the transcription of DNA into RNA using the four ribonucleoside triphosphates as substrates. The polypeptide is DNA-directed RNA polymerase subunit beta (Mycoplasma mycoides subsp. mycoides SC (strain CCUG 32753 / NCTC 10114 / PG1)).